The sequence spans 245 residues: tRNA (guanine-N(1)-)-methyltransferase (245 aa).

S-adenosyl-L-methionine contacts are provided by residues G111 and 131 to 136 (MGDYVL).

The protein belongs to the RNA methyltransferase TrmD family. In terms of assembly, homodimer.

It is found in the cytoplasm. The catalysed reaction is guanosine(37) in tRNA + S-adenosyl-L-methionine = N(1)-methylguanosine(37) in tRNA + S-adenosyl-L-homocysteine + H(+). Specifically methylates guanosine-37 in various tRNAs. The polypeptide is tRNA (guanine-N(1)-)-methyltransferase (Staphylococcus aureus (strain USA300)).